The primary structure comprises 427 residues: Homoprotocatechuate catabolism bifunctional isomerase/decarboxylase (427 aa).

Approximate repeat units lie at residues 1-202 (MKGT…LENP) and 203-405 (VVDE…VGDE). A divalent metal cation-binding residues include glutamate 276, glutamate 278, and aspartate 307.

Belongs to the FAH family. In terms of assembly, monomer. The cofactor is Mg(2+).

The catalysed reaction is (2E,4Z)-5-hydroxypenta-2,4-diene-1,2,5-tricarboxylate = (3E,5R)-5-carboxy-2-oxohept-3-enedioate. The enzyme catalyses (3E,5R)-5-carboxy-2-oxohept-3-enedioate + H(+) = (4Z)-2-oxohept-4-enedioate + CO2. The protein operates within aromatic compound metabolism; 4-hydroxyphenylacetate degradation; pyruvate and succinate semialdehyde from 4-hydroxyphenylacetate: step 4/7. It participates in aromatic compound metabolism; 4-hydroxyphenylacetate degradation; pyruvate and succinate semialdehyde from 4-hydroxyphenylacetate: step 5/7. Functionally, decarboxylates OPET (5-oxo-pent-3-ene-1,2,5-tricarboxylic acid) into HHDD (2-hydroxy-hept-2,4-diene-1,7-dioate) and isomerizes it to OHED (2-oxo-hept-3-ene-1,7-dioate). The protein is Homoprotocatechuate catabolism bifunctional isomerase/decarboxylase (hpcE) of Escherichia coli.